A 388-amino-acid polypeptide reads, in one-letter code: Succinate--CoA ligase [ADP-forming] subunit beta (388 aa).

The region spanning 9-244 (KEIFRSMGVA…LEEEDPKEIE (236 aa)) is the ATP-grasp domain. ATP-binding positions include lysine 46, 53–55 (GRG), glutamate 99, cysteine 102, and glutamate 107. 2 residues coordinate Mg(2+): asparagine 199 and aspartate 213. Substrate-binding positions include asparagine 264 and 321-323 (GIM).

Belongs to the succinate/malate CoA ligase beta subunit family. Heterotetramer of two alpha and two beta subunits. Mg(2+) is required as a cofactor.

The enzyme catalyses succinate + ATP + CoA = succinyl-CoA + ADP + phosphate. It carries out the reaction GTP + succinate + CoA = succinyl-CoA + GDP + phosphate. It functions in the pathway carbohydrate metabolism; tricarboxylic acid cycle; succinate from succinyl-CoA (ligase route): step 1/1. Succinyl-CoA synthetase functions in the citric acid cycle (TCA), coupling the hydrolysis of succinyl-CoA to the synthesis of either ATP or GTP and thus represents the only step of substrate-level phosphorylation in the TCA. The beta subunit provides nucleotide specificity of the enzyme and binds the substrate succinate, while the binding sites for coenzyme A and phosphate are found in the alpha subunit. In Staphylococcus epidermidis (strain ATCC 35984 / DSM 28319 / BCRC 17069 / CCUG 31568 / BM 3577 / RP62A), this protein is Succinate--CoA ligase [ADP-forming] subunit beta.